Reading from the N-terminus, the 476-residue chain is Oogenesin-2 (476 aa).

An LRR 1; degenerate repeat occupies 97-121; the sequence is RCKLREITLSHDLVVVWAGSHEVEG. One copy of the LRR 2; degenerate repeat lies at 176 to 200; that stretch reads HLHCRKLKIYGLTKAAVIEMFKIVH. The LRR 3; degenerate repeat unit spans residues 201–226; the sequence is AEYIEDLELSCLCLEYLDFLNPYLKQ. Residues 227 to 264 form an LRR 4; degenerate repeat; it reads MSNLLSLTLDEIIYTLNIDDYRNLNEEKVITVISHLPT. LRR repeat units follow at residues 265-285, 286-317, 342-369, and 370-394; these read FHHLQELYVHGVIFIECLRCL, KKPLEVLSFTDCDLSQSDLDYLPYCLNIFELR, RHTLKSLQLMSCEMGETHFNALLPALSQ, and CYQLTVVNFYGNELSLLFLKKLLHH.

The protein belongs to the PRAME family. In terms of tissue distribution, expressed in ovary, specifically in oocytes. Detected in follicles with two layers of granulosa cells, and are present in early as well as large antral follicles.

The polypeptide is Oogenesin-2 (Mus musculus (Mouse)).